The chain runs to 189 residues: Peptidyl-tRNA hydrolase (189 aa).

Tyr-15 contacts tRNA. Residue His-20 is the Proton acceptor of the active site. TRNA-binding residues include Tyr-65, Asn-67, and Asn-113.

This sequence belongs to the PTH family. In terms of assembly, monomer.

It is found in the cytoplasm. It carries out the reaction an N-acyl-L-alpha-aminoacyl-tRNA + H2O = an N-acyl-L-amino acid + a tRNA + H(+). Functionally, hydrolyzes ribosome-free peptidyl-tRNAs (with 1 or more amino acids incorporated), which drop off the ribosome during protein synthesis, or as a result of ribosome stalling. In terms of biological role, catalyzes the release of premature peptidyl moieties from peptidyl-tRNA molecules trapped in stalled 50S ribosomal subunits, and thus maintains levels of free tRNAs and 50S ribosomes. The sequence is that of Peptidyl-tRNA hydrolase from Caldicellulosiruptor bescii (strain ATCC BAA-1888 / DSM 6725 / KCTC 15123 / Z-1320) (Anaerocellum thermophilum).